The following is a 346-amino-acid chain: Putative cytochrome bd menaquinol oxidase subunit II (346 aa).

The next 9 membrane-spanning stretches (helical) occupy residues 7 to 27, 63 to 83, 87 to 107, 119 to 139, 164 to 184, 201 to 221, 236 to 256, 269 to 289, and 312 to 332; these read ALIAISIIWGFVFIYAVMATM, VFIVAIVVALFSFFPGATFVL, LLIPGSMILLLLAIRSGFLVF, YISGISGFIIPAILILVLPVT, AYSFIGFAILSTLFLSSLLLA, KSALITGPISLLFAVCIMVTM, FSWIIASFITFVIAGIALFLP, LALVAIGIQYFLASYAYGRAH, and ALFATYIVAFIILFPGFFFFW.

The protein belongs to the cytochrome ubiquinol oxidase subunit 2 family.

The protein localises to the cell membrane. May have a role in sporulation. Can compensate for the loss of cytochrome aa3. This Bacillus subtilis (strain 168) protein is Putative cytochrome bd menaquinol oxidase subunit II (ythB).